Here is a 522-residue protein sequence, read N- to C-terminus: MSNRVIIFDTTLRDGEQALAASLSVKEKLQIAMALERLGVDVMEVGFPVSSPGDFESVQTIARTIKNSRVCALSRALEKDIDAAAQALSVAEQFRIHTFISTSTIHVESKLKRSFEQVLEMAVGAVKYARRFTDDVEFSCEDAGRTPIDNLCRMVEAAIHAGARTINIPDTVGYTVPSEFGSIIQTLFNRVPNIDQAIISVHCHDDLGLSVANSITAVQHGARQIECTMNGIGERAGNCSLEEIAMILATRKNLLGFETGINAKEIHRTSNLVSQLCNMPIQSNKAIVGANAFTHSSGIHQDGMLKAQNTYEIMTPESIGLNRNNLNMTSRSGRHVIKHRMEEMGYSSQDYNLDALYEQFLHLADKKGQVFDYDLEALAFIEAQAAEDNFYQLRQLVVQSDSTEGVATATVRIEVGGEIKTEAATGNGPVDAAYNAIARATDRRIDIISYKLGAKGVGQDALGQVDITAVYHEQNFHGVGLATDVVEASARALVHVMNLTCRADKVADYKQNMHKNRELGGV.

Residues V5–H267 form the Pyruvate carboxyltransferase domain. The Mn(2+) site is built by D14, H202, H204, and N238. Positions Q392–V522 are regulatory domain.

This sequence belongs to the alpha-IPM synthase/homocitrate synthase family. LeuA type 1 subfamily. As to quaternary structure, homodimer. Requires Mn(2+) as cofactor.

Its subcellular location is the cytoplasm. The catalysed reaction is 3-methyl-2-oxobutanoate + acetyl-CoA + H2O = (2S)-2-isopropylmalate + CoA + H(+). It functions in the pathway amino-acid biosynthesis; L-leucine biosynthesis; L-leucine from 3-methyl-2-oxobutanoate: step 1/4. Catalyzes the condensation of the acetyl group of acetyl-CoA with 3-methyl-2-oxobutanoate (2-ketoisovalerate) to form 3-carboxy-3-hydroxy-4-methylpentanoate (2-isopropylmalate). The protein is 2-isopropylmalate synthase of Shewanella oneidensis (strain ATCC 700550 / JCM 31522 / CIP 106686 / LMG 19005 / NCIMB 14063 / MR-1).